A 316-amino-acid chain; its full sequence is 2-phospho-L-lactate guanylyltransferase (316 aa).

Positions 72-85 (TGVSTEAVSTSTST) are enriched in low complexity. 2 disordered regions span residues 72-107 (TGVS…PTHT) and 119-138 (LRDD…DGDK). A compositionally biased stretch (polar residues) spans 92–107 (HNAASDNYVSQSPTHT).

This sequence belongs to the CofC family. In terms of assembly, homodimer.

It catalyses the reaction (2S)-2-phospholactate + GTP + H(+) = (2S)-lactyl-2-diphospho-5'-guanosine + diphosphate. It functions in the pathway cofactor biosynthesis; coenzyme F420 biosynthesis. In terms of biological role, guanylyltransferase that catalyzes the activation of (2S)-2-phospholactate (2-PL) as (2S)-lactyl-2-diphospho-5'-guanosine, via the condensation of 2-PL with GTP. It is involved in the biosynthesis of coenzyme F420, a hydride carrier cofactor. This chain is 2-phospho-L-lactate guanylyltransferase, found in Haloquadratum walsbyi (strain DSM 16790 / HBSQ001).